Here is a 386-residue protein sequence, read N- to C-terminus: Succinate--CoA ligase [ADP-forming] subunit beta (386 aa).

Residues 9–244 form the ATP-grasp domain; sequence KELLKQFGVP…LDEEDPAEIE (236 aa). ATP is bound by residues Lys-46, 53–55, Glu-99, Ala-102, and Glu-107; that span reads GRG. Asn-199 and Asp-213 together coordinate Mg(2+). Substrate contacts are provided by residues Asn-264 and 321–323; that span reads GIM.

It belongs to the succinate/malate CoA ligase beta subunit family. In terms of assembly, heterotetramer of two alpha and two beta subunits. Requires Mg(2+) as cofactor.

The catalysed reaction is succinate + ATP + CoA = succinyl-CoA + ADP + phosphate. The enzyme catalyses GTP + succinate + CoA = succinyl-CoA + GDP + phosphate. Its pathway is carbohydrate metabolism; tricarboxylic acid cycle; succinate from succinyl-CoA (ligase route): step 1/1. Functionally, succinyl-CoA synthetase functions in the citric acid cycle (TCA), coupling the hydrolysis of succinyl-CoA to the synthesis of either ATP or GTP and thus represents the only step of substrate-level phosphorylation in the TCA. The beta subunit provides nucleotide specificity of the enzyme and binds the substrate succinate, while the binding sites for coenzyme A and phosphate are found in the alpha subunit. The protein is Succinate--CoA ligase [ADP-forming] subunit beta of Bordetella avium (strain 197N).